The chain runs to 90 residues: Probable Fe(2+)-trafficking protein (90 aa).

The protein belongs to the Fe(2+)-trafficking protein family.

In terms of biological role, could be a mediator in iron transactions between iron acquisition and iron-requiring processes, such as synthesis and/or repair of Fe-S clusters in biosynthetic enzymes. This chain is Probable Fe(2+)-trafficking protein, found in Azoarcus sp. (strain BH72).